Reading from the N-terminus, the 199-residue chain is Chaperone protein TorD (199 aa).

It belongs to the TorD/DmsD family. TorD subfamily.

The protein localises to the cytoplasm. In terms of biological role, involved in the biogenesis of TorA. Acts on TorA before the insertion of the molybdenum cofactor and, as a result, probably favors a conformation of the apoenzyme that is competent for acquiring the cofactor. The sequence is that of Chaperone protein TorD from Escherichia coli O8 (strain IAI1).